We begin with the raw amino-acid sequence, 463 residues long: Flotillin-like protein 2 (463 aa).

Residue C35 is the site of S-palmitoyl cysteine attachment. Residues 305 to 354 (EYETKVQEANWELYNKQKQAEAVLYEKQKQAEAQKAEADATFYSKQKEAE) adopt a coiled-coil conformation.

It belongs to the band 7/mec-2 family. Flotillin subfamily. In terms of processing, may be palmitoylated.

Its subcellular location is the cell membrane. It localises to the membrane. It is found in the caveola. In terms of biological role, may act as a scaffolding protein within caveolar membranes, functionally participating in formation of caveolae or caveolae-like vesicles. This Arabidopsis thaliana (Mouse-ear cress) protein is Flotillin-like protein 2 (FLOT2).